Here is a 63-residue protein sequence, read N- to C-terminus: Large ribosomal subunit protein bL28 (63 aa).

It belongs to the bacterial ribosomal protein bL28 family.

In Solibacter usitatus (strain Ellin6076), this protein is Large ribosomal subunit protein bL28.